We begin with the raw amino-acid sequence, 443 residues long: Transcriptional adapter 2-alpha (443 aa).

Serine 6 is modified (phosphoserine). The ZZ-type zinc-finger motif lies at 12-69 (SDKPPCRGCSSYLMEPYIKCAECGPPPFFLCLQCFTRGFEYKKHQSDHTYEIMTSDFP). Zn(2+) contacts are provided by cysteine 17, cysteine 20, cysteine 31, cysteine 34, cysteine 42, cysteine 45, histidine 55, and histidine 59. One can recognise an SANT domain in the interval 70–122 (VLDPSWTAQEEMALLEAVMDCGFGNWQDVANQMCTKTKEECEKHYMKHFINNP). Glycyl lysine isopeptide (Lys-Gly) (interchain with G-Cter in SUMO2) cross-links involve residues lysine 132 and lysine 138. The region spanning 356–443 (NSGRRSAPPL…LIREGYITKA (88 aa)) is the SWIRM domain. The DNA-binding element occupies 426-435 (KTRKIYDFLI).

In terms of assembly, interacts with GCN5 and NR3C1. Associated with the P/CAF protein in the PCAF complex. Component of the PCAF complex, at least composed of TADA2L/ADA2, TADA3L/ADA3, TAF5L/PAF65-beta, TAF6L/PAF65-alpha, TAF10/TAFII30, TAF12/TAFII20, TAF9/TAFII31 and TRRAP. Component of the ADA2A-containing complex (ATAC), composed of KAT14, KAT2A, TADA2L, TADA3L, ZZ3, MBIP, WDR5, YEATS2, CCDC101 and DR1. Interacts with CCDC134.

Its subcellular location is the nucleus. The protein localises to the chromosome. Component of the ATAC complex, a complex with histone acetyltransferase activity on histones H3 and H4. Required for the function of some acidic activation domains, which activate transcription from a distant site. Binds double-stranded DNA. Binds dinucleosomes, probably at the linker region between neighboring nucleosomes. Plays a role in chromatin remodeling. May promote TP53/p53 'Lys-321' acetylation, leading to reduced TP53 stability and transcriptional activity. May also promote XRCC6 acetylation thus facilitating cell apoptosis in response to DNA damage. The polypeptide is Transcriptional adapter 2-alpha (Tada2a) (Rattus norvegicus (Rat)).